Reading from the N-terminus, the 447-residue chain is 23S rRNA (uracil(1939)-C(5))-methyltransferase RlmD (447 aa).

Residues 7-66 (RKPLSQEPQKASIEALTHEGRGIAHVAGKTVFIDGALPGETVWFHYLRRRGKFDEGRVLE) form the TRAM domain. Cysteine 79, cysteine 85, cysteine 88, and cysteine 168 together coordinate [4Fe-4S] cluster. Residues glutamine 275, phenylalanine 304, asparagine 309, glutamate 325, aspartate 352, and aspartate 374 each coordinate S-adenosyl-L-methionine. Catalysis depends on cysteine 400, which acts as the Nucleophile.

Belongs to the class I-like SAM-binding methyltransferase superfamily. RNA M5U methyltransferase family. RlmD subfamily.

It carries out the reaction uridine(1939) in 23S rRNA + S-adenosyl-L-methionine = 5-methyluridine(1939) in 23S rRNA + S-adenosyl-L-homocysteine + H(+). In terms of biological role, catalyzes the formation of 5-methyl-uridine at position 1939 (m5U1939) in 23S rRNA. This chain is 23S rRNA (uracil(1939)-C(5))-methyltransferase RlmD, found in Nitrosococcus oceani (strain ATCC 19707 / BCRC 17464 / JCM 30415 / NCIMB 11848 / C-107).